A 685-amino-acid chain; its full sequence is Methionine--tRNA ligase (685 aa).

A 'HIGH' region motif is present at residues 12–22 (PYANGSIHLGH). 4 residues coordinate Zn(2+): Cys143, Cys146, Cys156, and Cys159. The 'KMSKS' region signature appears at 339–343 (KMSKS). Lys342 serves as a coordination point for ATP. In terms of domain architecture, tRNA-binding spans 582–685 (DFMKIDMRVA…TGAQPGDKVG (104 aa)).

Belongs to the class-I aminoacyl-tRNA synthetase family. MetG type 1 subfamily. Homodimer. Requires Zn(2+) as cofactor.

It is found in the cytoplasm. It catalyses the reaction tRNA(Met) + L-methionine + ATP = L-methionyl-tRNA(Met) + AMP + diphosphate. In terms of biological role, is required not only for elongation of protein synthesis but also for the initiation of all mRNA translation through initiator tRNA(fMet) aminoacylation. The polypeptide is Methionine--tRNA ligase (Neisseria meningitidis serogroup B (strain ATCC BAA-335 / MC58)).